The chain runs to 1015 residues: Fibronectin-binding protein A (1015 aa).

The first 36 residues, 1-36 (MKNNLRYGIRKHKLGAASVFLGTMIVVGMGQDKEAA), serve as a signal peptide directing secretion. Residues 7 to 18 (YGIRKHKLGAAS) carry the YSIRK-G/S signaling motif motif. Positions 37–512 (ASEQKTTTVE…SNKADGNGKN (476 aa)) are ligand-binding A region. A compositionally biased stretch (polar residues) spans 75-92 (SYSATATEQPSNATQVTT). The disordered stretch occupies residues 75-199 (SYSATATEQP…KVETGTDVTS (125 aa)). Basic and acidic residues predominate over residues 112 to 126 (TVKEEVVKEEAKPQV). A compositionally biased stretch (polar residues) spans 129 to 139 (TTQSQDNSGDQ). The span at 179–193 (DVVEAKEASDEKVET) shows a compositional bias: basic and acidic residues. Residues 194–512 (GTDVTSKVTV…SNKADGNGKN (319 aa)) are fibrinogen/elastin/tropoelastin-binding. Residues 513-873 (GQIIQNNDFE…EGQQTIEEDT (361 aa)) form a fibronectin-binding region. One copy of the B-1 repeat lies at 546-575 (ENQDNTPLDIDYHTAIDGEGGYVDGYIETI). The interval 546–605 (ENQDNTPLDIDYHTAIDGEGGYVDGYIETIEETDSSAIDIDYHTAVDSEAGHVGGYTESS) is 2 X approximate tandem repeats. A B-2 repeat occupies 576 to 605 (EETDSSAIDIDYHTAVDSEAGHVGGYTESS). Disordered regions lie at residues 596 to 623 (GHVG…NSKH), 741 to 815 (LGYE…IDFD), 828 to 953 (EIIE…GKVV), and 966 to 992 (VAPT…NKGM). A D-1 repeat occupies 746-783 (GQNSGNQSFEEDTEEDKPKYEQGGNIVDIDFDSVPQIQ). The 4 X approximate tandem repeats stretch occupies residues 746-875 (GQNSGNQSFE…QQTIEEDTTP (130 aa)). Residues 780-791 (PQIQGQNNGNQS) show a composition bias toward polar residues. Residues 784–821 (GQNNGNQSFEEDTEKDKPKYEQGGNIIDIDFDSVPQIH) form a D-2 repeat. A D-3 repeat occupies 822–860 (GFNKHTEIIEEDTNKDKPNYQFGGHNSVDFEEDTLPKVS). Positions 828 to 839 (EIIEEDTNKDKP) are enriched in basic and acidic residues. The D-4; truncated repeat unit spans residues 861–875 (GQNEGQQTIEEDTTP). Residues 875–935 (PPTPPTPEVP…PAEPGKPVPP (61 aa)) are compositionally biased toward pro residues. 5 WR repeats span residues 876 to 889 (PTPP…EPET), 890 to 903 (PTPP…EPET), 904 to 917 (PTPP…EPET), 918 to 931 (PTPP…EPGK), and 932 to 945 (PVPP…KPSK). The segment at 876–945 (PTPPTPEVPS…AKEEPKKPSK (70 aa)) is 5 X tandem repeats, Pro-rich (WR). An LPXTG sorting signal motif is present at residues 979–983 (LPETG). Thr-982 is modified (pentaglycyl murein peptidoglycan amidated threonine). A propeptide spans 983 to 1015 (GGEESTNKGMLFGGLFSILGLALLRRNKKNNKA) (removed by sortase).

It localises to the secreted. Its subcellular location is the cell wall. Functionally, promotes bacterial attachment to multiple substrates, such as fibronectin (Fn), fibrinogen (Fg), elastin peptides and tropoelastin. This confers to S.aureus the ability to invade endothelial cells. Promotes adherence to and aggregation of activated platelets. This chain is Fibronectin-binding protein A (fnbA), found in Staphylococcus aureus (strain MSSA476).